The chain runs to 194 residues: Leucyl/phenylalanyl-tRNA--protein transferase (194 aa).

This sequence belongs to the L/F-transferase family.

It is found in the cytoplasm. The enzyme catalyses N-terminal L-lysyl-[protein] + L-leucyl-tRNA(Leu) = N-terminal L-leucyl-L-lysyl-[protein] + tRNA(Leu) + H(+). The catalysed reaction is N-terminal L-arginyl-[protein] + L-leucyl-tRNA(Leu) = N-terminal L-leucyl-L-arginyl-[protein] + tRNA(Leu) + H(+). It carries out the reaction L-phenylalanyl-tRNA(Phe) + an N-terminal L-alpha-aminoacyl-[protein] = an N-terminal L-phenylalanyl-L-alpha-aminoacyl-[protein] + tRNA(Phe). Functions in the N-end rule pathway of protein degradation where it conjugates Leu, Phe and, less efficiently, Met from aminoacyl-tRNAs to the N-termini of proteins containing an N-terminal arginine or lysine. This chain is Leucyl/phenylalanyl-tRNA--protein transferase, found in Prosthecochloris aestuarii (strain DSM 271 / SK 413).